The chain runs to 651 residues: Intraflagellar transport protein 70A (651 aa).

TPR repeat units lie at residues 8–41, 42–75, 140–173, 175–207, 372–405, 410–443, and 445–478; these read DGEY…QYRS, RAGL…TPEV, PESE…MGYK, DLSY…GIRE, LTEQ…YDET, IPVL…CNEH, and IWKL…HYDN. Residues 494 to 521 adopt a coiled-coil conformation; sequence YIMTSQNEEAEELMRKIEKEEEQIAYEN. The TPR 8 repeat unit spans residues 530–563; the sequence is CIVNLVIGTLYCAKGNYEFGISRVIKSLEPYNKK.

The protein belongs to the TTC30/dfy-1/fleer family.

The protein localises to the cell projection. It localises to the cilium. Its function is as follows. Required for polyglutamylation of axonemal tubulin. Plays a role in anterograde intraflagellar transport (IFT), the process by which cilia precursors are transported from the base of the cilium to the site of their incorporation at the tip. The protein is Intraflagellar transport protein 70A (ift70a) of Xenopus tropicalis (Western clawed frog).